The following is a 216-amino-acid chain: MAPPIEVSTKSYVEKHVSLPTLNERILSSMSHRSVAAHPWHDLEIGPEAPIIFNCVVEIGKGSKVKYELDKTTGLIKVDRILYSSVVYPHNYGFIPRTLCEDSDPIDVLVIMQEPVIPGCFLRAKAIGLMPMIDQGEKDDKIIAVCADDPEYRHYNDISELPPHRMAEIRRFFEDYKKNENKEVAVNDFLPATAAYDAVQHSMDLYADYVVENLRR.

Position 18 is a phosphoserine (Ser-18). Substrate contacts are provided by Lys-66 and Arg-80. Catalysis depends on Tyr-88, which acts as the Proton donor. Tyr-92 contributes to the substrate binding site. Mg(2+) contacts are provided by Asp-102, Asp-107, and Asp-139. Tyr-176 is a substrate binding site.

The protein belongs to the PPase family. As to quaternary structure, monomer. Requires Mg(2+) as cofactor. As to expression, ubiquitous, excepted in pollen. Very low expression in cork, xylem and hypocotyls.

It localises to the cytoplasm. The enzyme catalyses diphosphate + H2O = 2 phosphate + H(+). Its activity is regulated as follows. Inhibited by Zn(2+), Ca(2+), Ba(2+), Fe(2+), Co(2+), Cu(2+), Eu(2+), Eu(3+) and Mn(2+). Functionally, catalyzes the irreversible hydrolysis of pyrophosphate (PPi) to phosphate. The MgPPi(2-) complex binds to the enzyme only after a free Mg(2+) ion has bound. No activity with glycerol-3-phosphate, glucose-6-phosphate, p-nitrophenylphosphate, ADP, NADP(+), NAD(+),NADH, NADPH or phosphoribosyl pyrophosphate as substrates. The sequence is that of Soluble inorganic pyrophosphatase 4 from Arabidopsis thaliana (Mouse-ear cress).